Here is a 208-residue protein sequence, read N- to C-terminus: Protein-L-isoaspartate O-methyltransferase (208 aa).

Residue Ser-59 is part of the active site.

Belongs to the methyltransferase superfamily. L-isoaspartyl/D-aspartyl protein methyltransferase family.

Its subcellular location is the cytoplasm. The enzyme catalyses [protein]-L-isoaspartate + S-adenosyl-L-methionine = [protein]-L-isoaspartate alpha-methyl ester + S-adenosyl-L-homocysteine. Functionally, catalyzes the methyl esterification of L-isoaspartyl residues in peptides and proteins that result from spontaneous decomposition of normal L-aspartyl and L-asparaginyl residues. It plays a role in the repair and/or degradation of damaged proteins. This chain is Protein-L-isoaspartate O-methyltransferase, found in Klebsiella pneumoniae (strain 342).